The primary structure comprises 283 residues: Glutamate racemase (283 aa).

Residues 28–29 and 60–61 each bind substrate; these read DS and YG. Cys92 serves as the catalytic Proton donor/acceptor. Substrate is bound at residue 93-94; that stretch reads NT. Catalysis depends on Cys204, which acts as the Proton donor/acceptor. A substrate-binding site is contributed by 205–206; the sequence is TH.

Belongs to the aspartate/glutamate racemases family.

The catalysed reaction is L-glutamate = D-glutamate. It functions in the pathway cell wall biogenesis; peptidoglycan biosynthesis. In terms of biological role, provides the (R)-glutamate required for cell wall biosynthesis. The sequence is that of Glutamate racemase from Salmonella gallinarum (strain 287/91 / NCTC 13346).